The chain runs to 173 residues: Orotate phosphoribosyltransferase (173 aa).

Residues Arg87, Lys88, Lys91, and 113–121 each bind 5-phospho-alpha-D-ribose 1-diphosphate; that span reads EDIATTGQS. Orotate is bound by residues Thr117 and Arg145.

This sequence belongs to the purine/pyrimidine phosphoribosyltransferase family. PyrE subfamily. As to quaternary structure, homodimer. Mg(2+) serves as cofactor.

It carries out the reaction orotidine 5'-phosphate + diphosphate = orotate + 5-phospho-alpha-D-ribose 1-diphosphate. It participates in pyrimidine metabolism; UMP biosynthesis via de novo pathway; UMP from orotate: step 1/2. Functionally, catalyzes the transfer of a ribosyl phosphate group from 5-phosphoribose 1-diphosphate to orotate, leading to the formation of orotidine monophosphate (OMP). In Natronomonas pharaonis (strain ATCC 35678 / DSM 2160 / CIP 103997 / JCM 8858 / NBRC 14720 / NCIMB 2260 / Gabara) (Halobacterium pharaonis), this protein is Orotate phosphoribosyltransferase.